A 334-amino-acid chain; its full sequence is uncharacterized protein (334 aa).

The protein belongs to the Gfo/Idh/MocA family.

This is an uncharacterized protein from Rhizobium meliloti (Ensifer meliloti).